The following is a 424-amino-acid chain: Serine--tRNA ligase (424 aa).

231 to 233 (TAE) is a binding site for L-serine. Position 262-264 (262-264 (RSE)) interacts with ATP. Glutamate 285 contacts L-serine. 349 to 352 (EISS) is a binding site for ATP. Serine 385 is an L-serine binding site.

It belongs to the class-II aminoacyl-tRNA synthetase family. Type-1 seryl-tRNA synthetase subfamily. As to quaternary structure, homodimer. The tRNA molecule binds across the dimer.

The protein localises to the cytoplasm. The catalysed reaction is tRNA(Ser) + L-serine + ATP = L-seryl-tRNA(Ser) + AMP + diphosphate + H(+). It catalyses the reaction tRNA(Sec) + L-serine + ATP = L-seryl-tRNA(Sec) + AMP + diphosphate + H(+). Its pathway is aminoacyl-tRNA biosynthesis; selenocysteinyl-tRNA(Sec) biosynthesis; L-seryl-tRNA(Sec) from L-serine and tRNA(Sec): step 1/1. Functionally, catalyzes the attachment of serine to tRNA(Ser). Is also able to aminoacylate tRNA(Sec) with serine, to form the misacylated tRNA L-seryl-tRNA(Sec), which will be further converted into selenocysteinyl-tRNA(Sec). The chain is Serine--tRNA ligase from Bacillus anthracis (strain A0248).